Consider the following 408-residue polypeptide: FAD-dependent monooxygenase nscC (408 aa).

The signal sequence occupies residues 1-20 (MASRLPILIIGAGISGLTTA). The FAD site is built by glutamate 34 and alanine 45. Asparagine 91 and asparagine 103 each carry an N-linked (GlcNAc...) asparagine glycan. An FAD-binding site is contributed by arginine 119. Residues asparagine 170 and asparagine 231 are each glycosylated (N-linked (GlcNAc...) asparagine). 2 residues coordinate FAD: aspartate 328 and glycine 341.

It belongs to the paxM FAD-dependent monooxygenase family. FAD serves as cofactor.

It functions in the pathway secondary metabolite biosynthesis. Its function is as follows. FAD-dependent monooxygenase; part of the gene cluster that mediates the biosynthesis of neosartoricin, a prenylated anthracenone that exhibits T-cell antiproliferative activity, suggestive of a physiological role as an immunosuppressive agent. The non-reducing polyketide synthase nscA probably synthesizes and cyclizes the decaketide backbone. The hydrolase nscB then mediates the product release through hydrolysis followed by spontaneous decarboxylation. The prenyltransferase nscD catalyzes the addition of the dimethylallyl group to the aromatic C5. The FAD-dependent monooxygenase nscC is then responsible for the stereospecific hydroxylation at C2. There is no gene encoding O-acetyltransferase in the nsc gene cluster; thus, the last step of 2-O-acetylation leading to neosartoricin may be catalyzed by an unidentified O-acetyltransferase. The polypeptide is FAD-dependent monooxygenase nscC (Aspergillus fumigatus (strain ATCC MYA-4609 / CBS 101355 / FGSC A1100 / Af293) (Neosartorya fumigata)).